Consider the following 162-residue polypeptide: Ribonuclease H (162 aa).

The 141-residue stretch at 1-141 (MKRIEIFTDG…ADALARAGMA (141 aa)) folds into the RNase H type-1 domain. Asp9, Glu47, Asp69, and Asp133 together coordinate Mg(2+). The disordered stretch occupies residues 139–162 (GMAPFKKKKGGDTASSEEGSARRR).

This sequence belongs to the RNase H family. In terms of assembly, monomer. It depends on Mg(2+) as a cofactor.

The protein resides in the cytoplasm. The catalysed reaction is Endonucleolytic cleavage to 5'-phosphomonoester.. In terms of biological role, endonuclease that specifically degrades the RNA of RNA-DNA hybrids. In Chelativorans sp. (strain BNC1), this protein is Ribonuclease H.